The following is a 426-amino-acid chain: 3-phosphoshikimate 1-carboxyvinyltransferase (426 aa).

3-phosphoshikimate contacts are provided by Lys22, Ser23, and Arg27. Lys22 contributes to the phosphoenolpyruvate binding site. Phosphoenolpyruvate contacts are provided by Gly96 and Arg124. Ser170, Ser171, Gln172, Ser198, Asp314, Asn337, and Lys341 together coordinate 3-phosphoshikimate. Gln172 is a phosphoenolpyruvate binding site. Residue Asp314 is the Proton acceptor of the active site. Arg345, Arg387, and Lys412 together coordinate phosphoenolpyruvate.

It belongs to the EPSP synthase family. As to quaternary structure, monomer.

The protein localises to the cytoplasm. It catalyses the reaction 3-phosphoshikimate + phosphoenolpyruvate = 5-O-(1-carboxyvinyl)-3-phosphoshikimate + phosphate. Its pathway is metabolic intermediate biosynthesis; chorismate biosynthesis; chorismate from D-erythrose 4-phosphate and phosphoenolpyruvate: step 6/7. Functionally, catalyzes the transfer of the enolpyruvyl moiety of phosphoenolpyruvate (PEP) to the 5-hydroxyl of shikimate-3-phosphate (S3P) to produce enolpyruvyl shikimate-3-phosphate and inorganic phosphate. This chain is 3-phosphoshikimate 1-carboxyvinyltransferase, found in Photobacterium damsela subsp. piscicida (Pasteurella piscicida).